The chain runs to 81 residues: uncharacterized protein (81 aa).

The next 2 membrane-spanning stretches (helical) occupy residues 4 to 24 (IFKM…FNYT) and 61 to 81 (NIYT…LHII).

It localises to the cell membrane. This is an uncharacterized protein from Bacillus subtilis (strain 168).